The chain runs to 401 residues: Subtilisin-like protease 10 (401 aa).

Positions 1-19 (MLFLKAVIAILSVLPAADA) are cleaved as a signal peptide. A propeptide spanning residues 20–116 (AAILNFENKQ…IEPDRMASAQ (97 aa)) is cleaved from the precursor. Residues 35 to 112 (SYIVVLKNDI…QVDYIEPDRM (78 aa)) form the Inhibitor I9 domain. The Peptidase S8 domain occupies 126 to 401 (SWGLGRISHQ…NRLLYNGSGQ (276 aa)). Catalysis depends on charge relay system residues D158 and H189. N250 carries N-linked (GlcNAc...) asparagine glycosylation. The active-site Charge relay system is the S347. N397 carries an N-linked (GlcNAc...) asparagine glycan.

This sequence belongs to the peptidase S8 family.

Its subcellular location is the secreted. Its function is as follows. Secreted subtilisin-like serine protease with keratinolytic activity that contributes to pathogenicity. The polypeptide is Subtilisin-like protease 10 (SUB10) (Arthroderma otae (strain ATCC MYA-4605 / CBS 113480) (Microsporum canis)).